A 159-amino-acid chain; its full sequence is Putative 2'-deoxynucleoside 5'-phosphate N-hydrolase 1 (159 aa).

Substrate contacts are provided by residues 25-31 (FLSGSIR), tyrosine 40, histidine 58, glutamate 104, and 126-128 (SAM).

The protein belongs to the 2'-deoxynucleoside 5'-phosphate N-hydrolase 1 family. As to quaternary structure, monomer and homodimer.

It catalyses the reaction a pyrimidine 2'-deoxyribonucleoside 5'-phosphate + H2O = a pyrimidine nucleobase + 2-deoxy-D-ribose 5-phosphate. It carries out the reaction a purine 2'-deoxyribonucleoside 5'-phosphate + H2O = a purine nucleobase + 2-deoxy-D-ribose 5-phosphate. In terms of biological role, catalyzes the cleavage of the N-glycosidic bond of deoxyribonucleoside 5'-monophosphates to yield deoxyribose 5-phosphate and a purine or pyrimidine base. The sequence is that of Putative 2'-deoxynucleoside 5'-phosphate N-hydrolase 1 from Methanosarcina barkeri (strain Fusaro / DSM 804).